The primary structure comprises 287 residues: uncharacterized protein (287 aa).

The disordered stretch occupies residues 1–44; that stretch reads MAAPRNLTGDGGARQLVKDEESPAASSAAKGLLNDDSPTGKRTK. Ser37 carries the post-translational modification Phosphoserine. 5 helical membrane passes run 55–75, 124–144, 147–167, 218–238, and 260–280; these read FAVFFTVFLVFTTGLFCIYLT, TFMIPGTIFMSLLAGALFGVV, FVLVVLNATAGACSCFFLSKL, PIVDIPFHVFFLATLVGLMPA, and DFKTLSVLFLIGSISIFPALL.

Its subcellular location is the membrane. This is an uncharacterized protein from Arabidopsis thaliana (Mouse-ear cress).